Here is a 261-residue protein sequence, read N- to C-terminus: Phosphatidylglycerol--prolipoprotein diacylglyceryl transferase (261 aa).

Helical transmembrane passes span Ile-12–Ala-32, Ile-41–Ala-61, Gly-87–Phe-107, and Leu-112–Ile-132. An a 1,2-diacyl-sn-glycero-3-phospho-(1'-sn-glycerol)-binding site is contributed by Arg-134. The next 3 helical transmembrane spans lie at Gln-170 to Leu-190, Gly-200 to Met-220, and Gly-229 to Ile-249.

The protein belongs to the Lgt family.

Its subcellular location is the cell membrane. It carries out the reaction L-cysteinyl-[prolipoprotein] + a 1,2-diacyl-sn-glycero-3-phospho-(1'-sn-glycerol) = an S-1,2-diacyl-sn-glyceryl-L-cysteinyl-[prolipoprotein] + sn-glycerol 1-phosphate + H(+). The protein operates within protein modification; lipoprotein biosynthesis (diacylglyceryl transfer). In terms of biological role, catalyzes the transfer of the diacylglyceryl group from phosphatidylglycerol to the sulfhydryl group of the N-terminal cysteine of a prolipoprotein, the first step in the formation of mature lipoproteins. The protein is Phosphatidylglycerol--prolipoprotein diacylglyceryl transferase of Streptococcus sanguinis (strain SK36).